The primary structure comprises 769 residues: Cullin-3 (769 aa).

The interval 614 to 655 (DRELPSTTSSTTTTTTTATSSSTSTSPSSSSSSISTPTPSKS) is disordered. Positions 618–653 (PSTTSSTTTTTTTATSSSTSTSPSSSSSSISTPTPS) are enriched in low complexity. Positions 699 to 761 (DRKHQIEASI…REYLERSKQD (63 aa)) constitute a Cullin neddylation domain. Lysine 713 participates in a covalent cross-link: Glycyl lysine isopeptide (Lys-Gly) (interchain with G-Cter in NEDD8).

Belongs to the cullin family. In terms of processing, neddylated. Deneddylated via its interaction with the COP9 signalosome (CSN) complex.

The protein localises to the nucleus. It participates in protein modification; protein ubiquitination. In terms of biological role, probable core component of cullin-based SCF-like E3 ubiquitin-protein ligase complexes which mediate the ubiquitination and subsequent proteasomal degradation of target proteins. The E3 ubiquitin-protein ligase activity of the complex is dependent on the neddylation of the cullin subunit. In Dictyostelium discoideum (Social amoeba), this protein is Cullin-3 (culC).